A 549-amino-acid chain; its full sequence is Probable chaperonin-like protein PrmG (549 aa).

Belongs to the chaperonin (HSP60) family.

Probably plays an essential role in the productive folding of PrmA, and thus in the formation of the active PrmABCD complex. The chain is Probable chaperonin-like protein PrmG (prmG) from Rhodococcus jostii (strain RHA1).